A 654-amino-acid polypeptide reads, in one-letter code: Fimbrin-2 (654 aa).

Calponin-homology (CH) domains lie at 124-241 (DSEK…KIQL), 269-372 (LPPE…QHRN), 394-500 (SREE…RYNI), and 515-623 (EITD…YWTL). 2 actin-binding regions span residues 124–372 (DSEK…QHRN) and 394–623 (SREE…YWTL).

As to quaternary structure, interacts with F-actin.

The protein localises to the cytoplasm. The protein resides in the cytoskeleton. Its function is as follows. Cross-links actin filaments (F-actin). Stabilizes and prevents F-actin depolymerization mediated by profilin. May regulate actin cytoarchitecture, cell cycle, cell division, cell elongation and cytoplasmic tractus. The sequence is that of Fimbrin-2 from Arabidopsis thaliana (Mouse-ear cress).